An 87-amino-acid chain; its full sequence is uncharacterized protein (87 aa).

It to bacteriophage lambda exonuclease exo.

This is an uncharacterized protein from Escherichia coli (strain K12).